The chain runs to 55 residues: Glycine-rich antimicrobial peptide Pg-AMP (55 aa).

Residues 18–39 are compositionally biased toward gly residues; that stretch reads GYGGYGGGRYGGGYGSGRGQPV. The segment at 18 to 55 is disordered; that stretch reads GYGGYGGGRYGGGYGSGRGQPVGQGVERSHDDNRNQPR. The span at 44–55 shows a compositional bias: basic and acidic residues; sequence ERSHDDNRNQPR.

Monomer and homodimer. Might act by homodimer formation.

In terms of biological role, has antibacterial activity against the Gram-negative bacteria Klebsiella sp., Proteus sp., E.coli ATCC 8739 (MIC=72 ug/ml) and K.pneumoniae (MIC=32 ug/ml). Has no activity against the Gram-negative bacterium S.typhimurium or the Gram-positive bacterium S.aureus. Does not have antifungal activity against the human and plant pathogenic fungi F.oxysporum, A.fumigatus and R.solani. This Psidium guajava (Guava) protein is Glycine-rich antimicrobial peptide Pg-AMP.